The following is a 700-amino-acid chain: ATP-dependent zinc metalloprotease FtsH (700 aa).

Topologically, residues Met1–Arg10 are cytoplasmic. The helical transmembrane segment at Ser11 to Gly31 threads the bilayer. The Extracellular portion of the chain corresponds to Asn32–Gly130. The helical transmembrane segment at Phe131 to Leu151 threads the bilayer. The Cytoplasmic segment spans residues Met152–Lys700. ATP is bound at residue Gly227–Thr234. His449 provides a ligand contact to Zn(2+). Glu450 is a catalytic residue. Residues His453 and Asp525 each coordinate Zn(2+). The disordered stretch occupies residues Lys644–Lys700.

The protein in the central section; belongs to the AAA ATPase family. This sequence in the C-terminal section; belongs to the peptidase M41 family. Homohexamer. The cofactor is Zn(2+).

The protein resides in the cell membrane. In terms of biological role, acts as a processive, ATP-dependent zinc metallopeptidase for both cytoplasmic and membrane proteins. Plays a role in the quality control of integral membrane proteins. This Leuconostoc mesenteroides subsp. mesenteroides (strain ATCC 8293 / DSM 20343 / BCRC 11652 / CCM 1803 / JCM 6124 / NCDO 523 / NBRC 100496 / NCIMB 8023 / NCTC 12954 / NRRL B-1118 / 37Y) protein is ATP-dependent zinc metalloprotease FtsH.